Here is a 357-residue protein sequence, read N- to C-terminus: Embryonic growth/differentiation factor 1 (357 aa).

An N-terminal signal peptide occupies residues 1 to 23; that stretch reads MLPVCHRFCDHLLLLLLLPSTTL. The propeptide occupies 24–237; that stretch reads APAPASMGPA…RLCPLPRLRR (214 aa). Residue asparagine 191 is glycosylated (N-linked (GlcNAc...) asparagine). Intrachain disulfides connect cysteine 251/cysteine 322, cysteine 280/cysteine 354, and cysteine 284/cysteine 356.

It belongs to the TGF-beta family. As to quaternary structure, homodimer; disulfide-linked. Expressed almost exclusively in the nervous system.

The protein localises to the secreted. Functionally, may mediate cell differentiation events during embryonic development. The polypeptide is Embryonic growth/differentiation factor 1 (Gdf1) (Mus musculus (Mouse)).